A 161-amino-acid chain; its full sequence is Phosphopantetheine adenylyltransferase (161 aa).

S11 contacts substrate. ATP contacts are provided by residues 11 to 12 and H19; that span reads SF. Residues K43, L75, and R89 each coordinate substrate. Residues 90–92, E100, and 125–131 each bind ATP; these read GLR and YSFISSS.

It belongs to the bacterial CoaD family. As to quaternary structure, homohexamer. It depends on Mg(2+) as a cofactor.

Its subcellular location is the cytoplasm. It carries out the reaction (R)-4'-phosphopantetheine + ATP + H(+) = 3'-dephospho-CoA + diphosphate. It functions in the pathway cofactor biosynthesis; coenzyme A biosynthesis; CoA from (R)-pantothenate: step 4/5. Functionally, reversibly transfers an adenylyl group from ATP to 4'-phosphopantetheine, yielding dephospho-CoA (dPCoA) and pyrophosphate. The protein is Phosphopantetheine adenylyltransferase of Staphylococcus epidermidis (strain ATCC 35984 / DSM 28319 / BCRC 17069 / CCUG 31568 / BM 3577 / RP62A).